The chain runs to 372 residues: Heat-inducible transcription repressor HrcA (372 aa).

Residues 300–334 form a disordered region; the sequence is YGRSGAAGEPAGNDPVGEPETESETESQTNDTEPI.

This sequence belongs to the HrcA family.

In terms of biological role, negative regulator of class I heat shock genes (grpE-dnaK-dnaJ and groELS operons). Prevents heat-shock induction of these operons. This chain is Heat-inducible transcription repressor HrcA, found in Bifidobacterium longum (strain NCC 2705).